A 103-amino-acid chain; its full sequence is Large ribosomal subunit protein bL21 (103 aa).

It belongs to the bacterial ribosomal protein bL21 family. As to quaternary structure, part of the 50S ribosomal subunit. Contacts protein L20.

Functionally, this protein binds to 23S rRNA in the presence of protein L20. The protein is Large ribosomal subunit protein bL21 of Lactobacillus helveticus (strain DPC 4571).